The following is a 582-amino-acid chain: Acylamino-acid-releasing enzyme (582 aa).

Active-site charge relay system residues include Ser445, Asp524, and His556.

This sequence belongs to the peptidase S9C family.

The protein localises to the cytoplasm. The catalysed reaction is Cleavage of an N-acetyl or N-formyl amino acid from the N-terminus of a polypeptide.. In terms of biological role, this enzyme catalyzes the hydrolysis of the N-terminal peptide bond of an N-acetylated peptide to generate an N-acetylated amino acid and a peptide with a free N-terminus. This is Acylamino-acid-releasing enzyme from Aeropyrum pernix (strain ATCC 700893 / DSM 11879 / JCM 9820 / NBRC 100138 / K1).